The primary structure comprises 194 residues: ATP-dependent Clp protease proteolytic subunit (194 aa).

Serine 98 functions as the Nucleophile in the catalytic mechanism. The active site involves histidine 123.

Belongs to the peptidase S14 family. In terms of assembly, fourteen ClpP subunits assemble into 2 heptameric rings which stack back to back to give a disk-like structure with a central cavity, resembling the structure of eukaryotic proteasomes.

It is found in the cytoplasm. It catalyses the reaction Hydrolysis of proteins to small peptides in the presence of ATP and magnesium. alpha-casein is the usual test substrate. In the absence of ATP, only oligopeptides shorter than five residues are hydrolyzed (such as succinyl-Leu-Tyr-|-NHMec, and Leu-Tyr-Leu-|-Tyr-Trp, in which cleavage of the -Tyr-|-Leu- and -Tyr-|-Trp bonds also occurs).. In terms of biological role, cleaves peptides in various proteins in a process that requires ATP hydrolysis. Has a chymotrypsin-like activity. Plays a major role in the degradation of misfolded proteins. This is ATP-dependent Clp protease proteolytic subunit from Clostridium kluyveri (strain NBRC 12016).